The following is a 237-amino-acid chain: Cytidylate kinase (237 aa).

15 to 23 (GPSGSGKGT) contributes to the ATP binding site.

This sequence belongs to the cytidylate kinase family. Type 1 subfamily.

The protein localises to the cytoplasm. The catalysed reaction is CMP + ATP = CDP + ADP. The enzyme catalyses dCMP + ATP = dCDP + ADP. The chain is Cytidylate kinase from Coxiella burnetii (strain RSA 493 / Nine Mile phase I).